A 501-amino-acid chain; its full sequence is Probable leucine aminopeptidase 2 (501 aa).

An N-terminal signal peptide occupies residues 1-18; the sequence is MVTMKLLYLTSFASLAVA. Residues 119-216 form the PA domain; sequence SPSVNATAPL…ADGQALIQMI (98 aa). Residues N123 and N233 are each glycosylated (N-linked (GlcNAc...) asparagine). Zn(2+)-binding residues include H257 and D269. E301 functions as the Proton acceptor in the catalytic mechanism. E302 contributes to the Zn(2+) binding site. N316 is a glycosylation site (N-linked (GlcNAc...) asparagine). D330 serves as a coordination point for Zn(2+). N350 carries an N-linked (GlcNAc...) asparagine glycan. H428 serves as a coordination point for Zn(2+). 2 N-linked (GlcNAc...) asparagine glycosylation sites follow: N433 and N467. The interval 480–501 is disordered; that stretch reads AMKRTPHTHTGGTGCYKDRVEQ.

This sequence belongs to the peptidase M28 family. M28A subfamily. Monomer. Zn(2+) is required as a cofactor.

The protein localises to the secreted. Functionally, extracellular aminopeptidase that releases a wide variety of amino acids from natural peptides and contributes to pathogenicity. This Aspergillus fumigatus (strain ATCC MYA-4609 / CBS 101355 / FGSC A1100 / Af293) (Neosartorya fumigata) protein is Probable leucine aminopeptidase 2 (lap2).